A 189-amino-acid chain; its full sequence is UPF0301 protein CCA_00630 (189 aa).

The protein belongs to the UPF0301 (AlgH) family.

This is UPF0301 protein CCA_00630 from Chlamydia caviae (strain ATCC VR-813 / DSM 19441 / 03DC25 / GPIC) (Chlamydophila caviae).